Consider the following 269-residue polypeptide: Regulatory protein RecX (269 aa).

This sequence belongs to the RecX family.

It localises to the cytoplasm. Modulates RecA activity. In Geobacillus kaustophilus (strain HTA426), this protein is Regulatory protein RecX.